The following is a 139-amino-acid chain: Translation initiation factor 2 subunit beta (139 aa).

This sequence belongs to the eIF-2-beta/eIF-5 family. As to quaternary structure, heterotrimer composed of an alpha, a beta and a gamma chain.

EIF-2 functions in the early steps of protein synthesis by forming a ternary complex with GTP and initiator tRNA. This chain is Translation initiation factor 2 subunit beta, found in Saccharolobus solfataricus (strain ATCC 35092 / DSM 1617 / JCM 11322 / P2) (Sulfolobus solfataricus).